The primary structure comprises 261 residues: Cobalt transport protein CbiM (261 aa).

The signal sequence occupies residues 1 to 33; it reads MLRRVLASKRASLILMGMLSFYIIVSASAPAYA. The next 7 membrane-spanning stretches (helical) occupy residues 41–61, 76–96, 108–128, 140–160, 172–192, 197–217, and 220–240; these read LPAGWAAFWWLVALPFMLLGV, LLLALAGAFTFVLSALKLPSV, LGSVLFGPLAMSVLGSLVLLF, TLGANAFSMAIAGPFAAYWIY, IAIFLAATLADLLTYIITSVQ, FPAPVGGFIASFAKFAGIFAI, and IPLAISEGLLTVLVWNWLQSY.

This sequence belongs to the CbiM family. As to quaternary structure, forms an energy-coupling factor (ECF) transporter complex composed of an ATP-binding protein (A component, CbiO), a transmembrane protein (T component, CbiQ) and 2 possible substrate-capture proteins (S components, CbiM and CbiN) of unknown stoichimetry.

It localises to the cell inner membrane. It participates in cofactor biosynthesis; adenosylcobalamin biosynthesis. In terms of biological role, part of the energy-coupling factor (ECF) transporter complex CbiMNOQ involved in cobalt import. The protein is Cobalt transport protein CbiM of Nostoc sp. (strain PCC 7120 / SAG 25.82 / UTEX 2576).